Reading from the N-terminus, the 242-residue chain is Ribosomal RNA small subunit methyltransferase G (242 aa).

S-adenosyl-L-methionine is bound by residues G79, 130-131 (VE), and Q149.

The protein belongs to the methyltransferase superfamily. RNA methyltransferase RsmG family.

Its subcellular location is the cytoplasm. Specifically methylates the N7 position of a guanine in 16S rRNA. This Mycoplasmoides gallisepticum (strain R(low / passage 15 / clone 2)) (Mycoplasma gallisepticum) protein is Ribosomal RNA small subunit methyltransferase G.